A 413-amino-acid polypeptide reads, in one-letter code: 2,3-bisphosphoglycerate-independent phosphoglycerate mutase (413 aa).

Belongs to the BPG-independent phosphoglycerate mutase family. A-PGAM subfamily.

The catalysed reaction is (2R)-2-phosphoglycerate = (2R)-3-phosphoglycerate. Its pathway is carbohydrate degradation; glycolysis; pyruvate from D-glyceraldehyde 3-phosphate: step 3/5. Its function is as follows. Catalyzes the interconversion of 2-phosphoglycerate and 3-phosphoglycerate. This is 2,3-bisphosphoglycerate-independent phosphoglycerate mutase from Metallosphaera sedula (strain ATCC 51363 / DSM 5348 / JCM 9185 / NBRC 15509 / TH2).